A 664-amino-acid polypeptide reads, in one-letter code: ATP synthase subunit alpha 2 (664 aa).

180–187 (GDRATGKT) is a binding site for ATP. Positions 525–664 (MPAEDAAGDI…DAEAEARHKR (140 aa)) are disordered. The span at 543 to 588 (ARGDADRDADHGANREVSREVSPEASREVSREVSCEVSHEADRDAA) shows a compositional bias: basic and acidic residues. A compositionally biased stretch (low complexity) spans 589 to 599 (ADAARVAGRAP). Residues 621–639 (ADGDRASASRPRPDARGDA) show a composition bias toward basic and acidic residues.

Belongs to the ATPase alpha/beta chains family. F-type ATPases have 2 components, CF(1) - the catalytic core - and CF(0) - the membrane proton channel. CF(1) has five subunits: alpha(3), beta(3), gamma(1), delta(1), epsilon(1). CF(0) has three main subunits: a(1), b(2) and c(9-12). The alpha and beta chains form an alternating ring which encloses part of the gamma chain. CF(1) is attached to CF(0) by a central stalk formed by the gamma and epsilon chains, while a peripheral stalk is formed by the delta and b chains.

It localises to the cell inner membrane. It catalyses the reaction ATP + H2O + 4 H(+)(in) = ADP + phosphate + 5 H(+)(out). Its function is as follows. Produces ATP from ADP in the presence of a proton gradient across the membrane. The alpha chain is a regulatory subunit. In Burkholderia pseudomallei (strain 1710b), this protein is ATP synthase subunit alpha 2.